We begin with the raw amino-acid sequence, 494 residues long: MVNEISPRTLVLLAVTCSLLVLYFSTRERQPVMPRELPVVKAKSYHFEDIIVEGRKKYPDRPYLAVNNRHSFVVYPPSCFDEIKRLPEHSASAKDFFHTMNAGDWTYVGHETTPLLKTIIADLTRVIPARVNKRQQDTRMAFESIVGYAPEWKEIGLLMTTFEIVAKINACAFVGRELGTNNKWVKAVMQSPLVIHVAVLIMNACPALLRPLLAPLAFLPTKMNQWDMRRLLTPMLQEDMAIFKETKDRSELLRPKQNGKIPLTAMLLSRYKQGEATIRQLIVDYILISFDSTPSTASALYHVICELAAHPEAADVLRQELDEVMVDGKLPQTHLQELKRMDSFLRESFRLHPVSLFSLQRVLAKPVKLSVGPTIPAGAIIAVDAAAINRSPSLWKDPDEFDMNRFHDLRQVPGNENKFHLLNTGSDSPGWGDGTQACPGRFFANSTLKIAFAYILQNYDVKRKEGSSPPKMTPLANGTWAPDDKAAALFKSRN.

The chain crosses the membrane as a helical span at residues 5–25; it reads ISPRTLVLLAVTCSLLVLYFS. Residue Cys-438 participates in heme binding. N-linked (GlcNAc...) asparagine glycosylation is found at Asn-445 and Asn-477.

Belongs to the cytochrome P450 family. Heme serves as cofactor.

It is found in the membrane. It functions in the pathway mycotoxin biosynthesis. Functionally, cytochrome P450 monooxygenase; part of the gene cluster that mediates the biosynthesis of a family of the mycotoxins cytochalasins E and K. The hybrid PKS-NRPS synthetase ccsA and the enoyl reductase ccsC are responsible for fusion of phenylalanine with an octaketide backbone and subsequent release of the stable tetramic acid precursor. The polyketide synthase module (PKS) of the PKS-NRPS ccsA is responsible for the synthesis of the octaketide backbone. The downstream nonribosomal peptide synthetase (NRPS) amidates the carboxyl end of the octaketide with a phenylalanine. A reductase-like domain (R) at the C-terminus catalyzes the reductive release of the polyketide-amino acid intermediate. Because ccsA lacks a designated enoylreductase (ER) domain, the required activity is provided the enoyl reductase ccsC. Upon formation of the 11-membered carbocycle-fused perhydroisoindolone intermediate, a number of oxidative steps are required to afford the final cytochalasin E and K, including two hydroxylations at C17 and C18, one alcohol oxidation at C17, one epoxidation at C6 and C7 and two Baeyer-Villiger oxidations. The oxidative modification at C17, C18 and the C6-C7 epoxidation are likely to be catalyzed by the two cytochrome P450 oxygenases ccsD and ccsG. CcsD may be responsible for the epoxidation of the C6-C7 double bond. CcsG may be responsible for the successive oxidative modifications at C17 and C18. The double Baeyer-Villiger oxidations of ketocytochalasin to precytochalasin and cytochalasin Z(16) are among the final steps leading to cytochalasin E and K and are catalyzed by ccsB. The first oxygen insertion step follows that of the classic BVMO mechanism, generating the ester precytochalasin. Release of precytochalasin into an aqueous environment can generate the shunt product iso-precytochalasin through spontaneous isomerization. Alternatively, precytochalasin can undergo further oxidation by ccsB to yield the in-line carbonate-containing cytochalasin Z(16). Cytochalasin Z(16) is a precursor to cytochalasin E and cytochalasin K, whereas iso-precytochalasin is a precursor to cytochalasin Z(17) and rosellichalasin. The hydrolyase ccsE may catalyze hydrolysis of epoxide bond in cytochalasin E to afford cytochalasin K. The function of ccsF has not been assigned but it may play a role in post-PKS-NRPS biosynthetic step, resistance or transport of cytochalasins and related PKS-NRPS products. The sequence is that of Cytochrome P450 monooxygenase ccsD from Aspergillus clavatus (strain ATCC 1007 / CBS 513.65 / DSM 816 / NCTC 3887 / NRRL 1 / QM 1276 / 107).